Consider the following 1473-residue polypeptide: Ovostatin (1473 aa).

An N-terminal signal peptide occupies residues 1 to 36 (MHCFLGREILSFFCLTVRKMWLKFILAILLLHAAAG). N-linked (GlcNAc...) asparagine glycans are attached at residues asparagine 67, asparagine 82, asparagine 89, asparagine 191, asparagine 342, asparagine 403, asparagine 527, asparagine 588, asparagine 757, asparagine 1141, asparagine 1221, asparagine 1315, and asparagine 1347.

It belongs to the protease inhibitor I39 (alpha-2-macroglobulin) family. As to quaternary structure, homotetramer, which consists of two pairs of disulfide-linked chains. Post-translationally, lacks the thioester bond found in other members of this family. In terms of processing, glycosylated; contains 56 glucosamine units per subunit.

It is found in the secreted. Functionally, is able to inhibit all four classes of proteinases by a unique 'trapping' mechanism. This protein has a peptide stretch, called the 'bait region' which contains specific cleavage sites for different proteinases. When a proteinase cleaves the bait region, a conformational change is induced in the protein which traps the proteinase. The entrapped enzyme remains active against low molecular weight substrates (activity against high molecular weight substrates is greatly reduced). This Gallus gallus (Chicken) protein is Ovostatin.